We begin with the raw amino-acid sequence, 291 residues long: MANNMLHRYLFKDLSVRGELVQLDDTYQQMISSQEYPAAVQHLIGELLVATSLLTATLKFEGSITLQLQGNGPVSLVVINGDNNQQVRGVARWKGDIADDASLHDMLGKGHLVITIEPKQGERYQGVVGLEGDTLAQVLEGYFERSEQLKTRLWIRVGKHDGKACAAGMLLQIVPDGKGSAEDFEHLEQLTNTIKDEELFALPAEELLYRLYNQETVQLFTPQQISFRCGCSRERSAAAIVTVAREEINDILAQDGAVALHCDYCGTTYSFDSAQVAELYAPSSANGSTLH.

Disulfide bonds link Cys-229/Cys-231 and Cys-262/Cys-265.

This sequence belongs to the HSP33 family. In terms of processing, under oxidizing conditions two disulfide bonds are formed involving the reactive cysteines. Under reducing conditions zinc is bound to the reactive cysteines and the protein is inactive.

It localises to the cytoplasm. Its function is as follows. Redox regulated molecular chaperone. Protects both thermally unfolding and oxidatively damaged proteins from irreversible aggregation. Plays an important role in the bacterial defense system toward oxidative stress. In Vibrio cholerae serotype O1 (strain ATCC 39315 / El Tor Inaba N16961), this protein is 33 kDa chaperonin.